The sequence spans 110 residues: Large ribosomal subunit protein uL22 (110 aa).

This sequence belongs to the universal ribosomal protein uL22 family. Part of the 50S ribosomal subunit.

Its function is as follows. This protein binds specifically to 23S rRNA; its binding is stimulated by other ribosomal proteins, e.g. L4, L17, and L20. It is important during the early stages of 50S assembly. It makes multiple contacts with different domains of the 23S rRNA in the assembled 50S subunit and ribosome. In terms of biological role, the globular domain of the protein is located near the polypeptide exit tunnel on the outside of the subunit, while an extended beta-hairpin is found that lines the wall of the exit tunnel in the center of the 70S ribosome. In Marinobacter nauticus (strain ATCC 700491 / DSM 11845 / VT8) (Marinobacter aquaeolei), this protein is Large ribosomal subunit protein uL22.